Here is a 214-residue protein sequence, read N- to C-terminus: Outer-membrane lipoprotein LolB (214 aa).

Residues 1–25 (MNNLKRLTKTIFSCFTLSALLLLAG) form the signal peptide. Residue C26 is the site of N-palmitoyl cysteine attachment. C26 carries the S-diacylglycerol cysteine lipid modification. The segment covering 143-160 (QVIESDSQGKPKQLTNTQ) has biased composition (polar residues). The tract at residues 143–163 (QVIESDSQGKPKQLTNTQTPP) is disordered.

Belongs to the LolB family. As to quaternary structure, monomer.

The protein resides in the cell outer membrane. Functionally, plays a critical role in the incorporation of lipoproteins in the outer membrane after they are released by the LolA protein. The protein is Outer-membrane lipoprotein LolB of Shewanella baltica (strain OS223).